Reading from the N-terminus, the 190-residue chain is Apolipoprotein M (190 aa).

The not cleaved signal peptide spans 1–22 (MFHQVWAALLSLYGLLFNSMNQ). Intrachain disulfides connect cysteine 23-cysteine 169, cysteine 95-cysteine 185, and cysteine 130-cysteine 159. The tetradecanoate site is built by glutamate 138 and arginine 145.

It belongs to the calycin superfamily. Lipocalin family. Highly divergent. In terms of assembly, interacts with LRP2; LRP2 mediates APOM renal uptake and subsequent lysosomal degradation. As to expression, expressed by the liver; secreted in plasma.

Its subcellular location is the secreted. Probably involved in lipid transport. Can bind sphingosine-1-phosphate, myristic acid, palmitic acid and stearic acid, retinol, all-trans-retinoic acid and 9-cis-retinoic acid. This is Apolipoprotein M (Apom) from Mus musculus (Mouse).